We begin with the raw amino-acid sequence, 162 residues long: uncharacterized protein (162 aa).

The disordered stretch occupies residues 1 to 49; the sequence is MNSRTASARGWFSSRPPTSESDLEPATDGPASETTTLSPEATTFNDTRI. The segment covering 32 to 46 has biased composition (polar residues); sequence SETTTLSPEATTFND. Residues 62-82 traverse the membrane as a helical segment; sequence MLLSFGIITVIGLAVALVLYI.

The protein localises to the membrane. This is an uncharacterized protein from Homo sapiens (Human).